The chain runs to 742 residues: MEFVSGYRDEFLDFTALLFGWFRKFVAERGAVGTSLEGRCRQLEAQIRRLPQDPALWVLHVLPNHSVGISLGQGAEPGPGPGLGTAWLLGDNPPLHLRDLSPYISFVSLEDGEEGEEEEEEDEEEEKREDGGAGSTEKVEPEEDRELAPTSRESPQETNPPGESEEAAREAGGGKDGCREDRVENETRPQKRKGQRSEAAPLHVSCLLLVTDEHGTILGIDLLVDGAQGTASWGSGTKDLAPWAYALLCHSMACPMGSGDPRKPRQLTVGDARLHRELESLVPRLGVKLAKTPMRTWGPRPGFTFASLRARTCHVCHRHSFEAKLTPCPQCSAVLYCGEACLRADWQRCPDDVSHRFWCPRLAAFMERAGELATLPFTYTAEVTSETFNKEAFLASRGLTRGYWTQLSMLIPGPGFSRHPRGNTPSLSLLRGGDPYQLLQGDGTALMPPVPPHPPRGVFGSWQDYYTWRGLSLDSPIAVLLTYPLTVYYVITHLVPQSFPELNIQNKQSLKIHVVEAGKEFDLVMVFWELLVLLPHVALELQFVGDGLPPESDEQHFTLQRDSLEVSVRPGSGISARPSSGTKEKGGRRDLQIKVSARPYHLFQGPKPDLVIGFNSGFALKDTWLRSLPRLQSLRVPAFFTESSEYSCVMDGQTMAVATGGGTSPPQPNPFRSPFRLRAADNCMSWYCNAFIFHLVYKPAQGSGARPAPGPPPPSPTPSAPPAPTRRRRGEKKPGRGARRRK.

Residues 109–199 (LEDGEEGEEE…QKRKGQRSEA (91 aa)) form a disordered region. The span at 110–127 (EDGEEGEEEEEEDEEEEK) shows a compositional bias: acidic residues. The span at 151-161 (SRESPQETNPP) shows a compositional bias: polar residues. Residues 166 to 189 (EAAREAGGGKDGCREDRVENETRP) are compositionally biased toward basic and acidic residues. Zn(2+)-binding residues include cysteine 313, cysteine 316, cysteine 328, cysteine 331, cysteine 337, cysteine 341, histidine 355, and cysteine 359. An MYND-type zinc finger spans residues 313–359 (CHVCHRHSFEAKLTPCPQCSAVLYCGEACLRADWQRCPDDVSHRFWC). Disordered stretches follow at residues 565 to 590 (EVSV…GRRD) and 701 to 742 (QGSG…RRRK). Pro residues predominate over residues 708-724 (APGPPPPSPTPSAPPAP). Residues 725–742 (TRRRRGEKKPGRGARRRK) are compositionally biased toward basic residues.

In terms of assembly, interacts with HDAC1, HDAC3, HDAC6 and, to a lesser extent, with HDAC7.

It localises to the nucleus. It is found in the cytoplasm. Its function is as follows. Acts as a transcriptional repressor through interaction with histone deacetylases (HDACs). May be important for spermiogenesis. The polypeptide is Zinc finger MYND domain-containing protein 15 (ZMYND15) (Homo sapiens (Human)).